We begin with the raw amino-acid sequence, 118 residues long: V-type proton ATPase subunit G 2 (118 aa).

Residues 23–90 (ADARKRKARR…VQGMQSSQQR (68 aa)) are disordered. Positions 35–55 (QAKEEAQMEVEQYRREREQEF) are enriched in basic and acidic residues. 2 stretches are compositionally biased toward polar residues: residues 56 to 69 (QSKQ…QGNL) and 78 to 89 (RRQVQGMQSSQQ).

It belongs to the V-ATPase G subunit family. In terms of assembly, V-ATPase is a heteromultimeric enzyme made up of two complexes: the ATP-hydrolytic V1 complex and the proton translocation V0 complex. The V1 complex consists of three catalytic AB heterodimers that form a heterohexamer, three peripheral stalks each consisting of EG heterodimers, one central rotor including subunits D and F, and the regulatory subunits C and H. The proton translocation complex V0 consists of the proton transport subunit a, a ring of proteolipid subunits c9c'', rotary subunit d, subunits e and f, and the accessory subunits ATP6AP1/Ac45 and ATP6AP2/PRR.

The protein localises to the melanosome. It localises to the cytoplasmic vesicle. It is found in the clathrin-coated vesicle membrane. Subunit of the V1 complex of vacuolar(H+)-ATPase (V-ATPase), a multisubunit enzyme composed of a peripheral complex (V1) that hydrolyzes ATP and a membrane integral complex (V0) that translocates protons. V-ATPase is responsible for acidifying and maintaining the pH of intracellular compartments and in some cell types, is targeted to the plasma membrane, where it is responsible for acidifying the extracellular environment. The chain is V-type proton ATPase subunit G 2 (ATP6V1G2) from Macaca mulatta (Rhesus macaque).